The chain runs to 68 residues: Large ribosomal subunit protein bL35 (68 aa).

Belongs to the bacterial ribosomal protein bL35 family.

This Wolbachia pipientis wMel protein is Large ribosomal subunit protein bL35.